The sequence spans 394 residues: Elongation factor Tu (394 aa).

The tr-type G domain maps to 10-204; the sequence is KPHVNVGTIG…HLDTYIPEPE (195 aa). The interval 19-26 is G1; that stretch reads GHVDHGKT. Position 19 to 26 (19 to 26) interacts with GTP; the sequence is GHVDHGKT. Threonine 26 contacts Mg(2+). Residues 60 to 64 form a G2 region; it reads GITIN. Residues 81-84 are G3; sequence DCPG. GTP contacts are provided by residues 81 to 85 and 136 to 139; these read DCPGH and NKCD. The G4 stretch occupies residues 136–139; the sequence is NKCD. The tract at residues 174-176 is G5; that stretch reads SAL.

Belongs to the TRAFAC class translation factor GTPase superfamily. Classic translation factor GTPase family. EF-Tu/EF-1A subfamily. As to quaternary structure, monomer.

The protein resides in the cytoplasm. It catalyses the reaction GTP + H2O = GDP + phosphate + H(+). In terms of biological role, GTP hydrolase that promotes the GTP-dependent binding of aminoacyl-tRNA to the A-site of ribosomes during protein biosynthesis. This chain is Elongation factor Tu, found in Aeromonas hydrophila subsp. hydrophila (strain ATCC 7966 / DSM 30187 / BCRC 13018 / CCUG 14551 / JCM 1027 / KCTC 2358 / NCIMB 9240 / NCTC 8049).